Consider the following 479-residue polypeptide: Glutamyl-tRNA(Gln) amidotransferase subunit A (479 aa).

Active-site charge relay system residues include K74 and S149. S173 serves as the catalytic Acyl-ester intermediate.

It belongs to the amidase family. GatA subfamily. Heterotrimer of A, B and C subunits.

The catalysed reaction is L-glutamyl-tRNA(Gln) + L-glutamine + ATP + H2O = L-glutaminyl-tRNA(Gln) + L-glutamate + ADP + phosphate + H(+). Allows the formation of correctly charged Gln-tRNA(Gln) through the transamidation of misacylated Glu-tRNA(Gln) in organisms which lack glutaminyl-tRNA synthetase. The reaction takes place in the presence of glutamine and ATP through an activated gamma-phospho-Glu-tRNA(Gln). The chain is Glutamyl-tRNA(Gln) amidotransferase subunit A from Cenarchaeum symbiosum (strain A).